We begin with the raw amino-acid sequence, 272 residues long: uncharacterized protein (272 aa).

The signal sequence occupies residues 1–20 (MMEPKSIFLLGLLLFRVGKL).

This is an uncharacterized protein from Caenorhabditis elegans.